A 715-amino-acid chain; its full sequence is DNA ligase (715 aa).

NAD(+)-binding positions include 47-51 (DADYD), 96-97 (SL), and Glu128. Lys130 serves as the catalytic N6-AMP-lysine intermediate. Arg151, Glu188, Lys306, and Lys330 together coordinate NAD(+). Zn(2+) is bound by residues Cys435, Cys438, Cys453, and Cys459. The BRCT domain maps to 637–715 (RRDTAVAGKT…EDEWLALIGN (79 aa)).

It belongs to the NAD-dependent DNA ligase family. LigA subfamily. Mg(2+) serves as cofactor. Requires Mn(2+) as cofactor.

The enzyme catalyses NAD(+) + (deoxyribonucleotide)n-3'-hydroxyl + 5'-phospho-(deoxyribonucleotide)m = (deoxyribonucleotide)n+m + AMP + beta-nicotinamide D-nucleotide.. Functionally, DNA ligase that catalyzes the formation of phosphodiester linkages between 5'-phosphoryl and 3'-hydroxyl groups in double-stranded DNA using NAD as a coenzyme and as the energy source for the reaction. It is essential for DNA replication and repair of damaged DNA. In Rhodopseudomonas palustris (strain TIE-1), this protein is DNA ligase.